Consider the following 319-residue polypeptide: MSIREWFEDRRKITGLLKNSVERDSKDVNEMERNKNLSIDYVKINRLWVQCDNCESLLYIRFLRENKSVCEECGYYLQMNSSDRIELLIDRGTRHPMDEDMYTLDVLQFHSENEPAHSDPLHSEDESYKDHITFCQIETGLTDAIQTGIGQLNGLPIALGVMDFKFMGGSMGSVVGEKITRLIERATEESLPVIMVCASGGARMQEGSFSSMQMAKIASALYIPQKDNRLLYVSILTSPTTGGVTASFGMLGDIIIAEPKAYIAFAGKIVIDQTLGQKVIEDFQVTEHLFGHGLFDLIVPRNLLKCVLSELFYVLQSSS.

Residues 47 to 319 (LWVQCDNCES…ELFYVLQSSS (273 aa)) form the CoA carboxyltransferase N-terminal domain. Cys51, Cys54, Cys70, and Cys73 together coordinate Zn(2+). A C4-type zinc finger spans residues 51–73 (CDNCESLLYIRFLRENKSVCEEC).

It belongs to the AccD/PCCB family. In terms of assembly, acetyl-CoA carboxylase is a heterohexamer composed of biotin carboxyl carrier protein, biotin carboxylase and 2 subunits each of ACCase subunit alpha and ACCase plastid-coded subunit beta (accD). Zn(2+) is required as a cofactor.

It localises to the plastid. The protein resides in the chloroplast stroma. It carries out the reaction N(6)-carboxybiotinyl-L-lysyl-[protein] + acetyl-CoA = N(6)-biotinyl-L-lysyl-[protein] + malonyl-CoA. The protein operates within lipid metabolism; malonyl-CoA biosynthesis; malonyl-CoA from acetyl-CoA: step 1/1. Functionally, component of the acetyl coenzyme A carboxylase (ACC) complex. Biotin carboxylase (BC) catalyzes the carboxylation of biotin on its carrier protein (BCCP) and then the CO(2) group is transferred by the transcarboxylase to acetyl-CoA to form malonyl-CoA. The polypeptide is Acetyl-coenzyme A carboxylase carboxyl transferase subunit beta, chloroplastic (Picea abies (Norway spruce)).